The following is a 354-amino-acid chain: UPF0597 protein PPA0217 (354 aa).

It belongs to the UPF0597 family.

This is UPF0597 protein PPA0217 from Cutibacterium acnes (strain DSM 16379 / KPA171202) (Propionibacterium acnes).